A 129-amino-acid chain; its full sequence is Glycine cleavage system H protein (129 aa).

Positions 24-106 (TFTVGISEHA…YGDGWLFRIK (83 aa)) constitute a Lipoyl-binding domain. Residue K65 is modified to N6-lipoyllysine.

The protein belongs to the GcvH family. As to quaternary structure, the glycine cleavage system is composed of four proteins: P, T, L and H. The cofactor is (R)-lipoate.

Functionally, the glycine cleavage system catalyzes the degradation of glycine. The H protein shuttles the methylamine group of glycine from the P protein to the T protein. The polypeptide is Glycine cleavage system H protein (Idiomarina loihiensis (strain ATCC BAA-735 / DSM 15497 / L2-TR)).